A 339-amino-acid chain; its full sequence is DNA-directed RNA polymerase subunit alpha (339 aa).

The alpha N-terminal domain (alpha-NTD) stretch occupies residues M1–E233. The alpha C-terminal domain (alpha-CTD) stretch occupies residues K264–F339.

This sequence belongs to the RNA polymerase alpha chain family. In plastids the minimal PEP RNA polymerase catalytic core is composed of four subunits: alpha, beta, beta', and beta''. When a (nuclear-encoded) sigma factor is associated with the core the holoenzyme is formed, which can initiate transcription.

It is found in the plastid. The protein localises to the chloroplast. The catalysed reaction is RNA(n) + a ribonucleoside 5'-triphosphate = RNA(n+1) + diphosphate. In terms of biological role, DNA-dependent RNA polymerase catalyzes the transcription of DNA into RNA using the four ribonucleoside triphosphates as substrates. The polypeptide is DNA-directed RNA polymerase subunit alpha (Psathyrostachys fragilis (Russian wild rye)).